Consider the following 562-residue polypeptide: Gut esterase 1 (562 aa).

The signal sequence occupies residues 1–16 (MRVLLASLLIFGACWA). Cys-75 and Cys-93 form a disulfide bridge. Ser-199 acts as the Acyl-ester intermediate in catalysis. A disulfide bridge links Cys-251 with Cys-259. Active-site charge relay system residues include Glu-320 and His-451. Residues 559–562 (KDEL) carry the Prevents secretion from ER motif.

The protein belongs to the type-B carboxylesterase/lipase family. In terms of tissue distribution, expressed only in the intestine.

It localises to the endoplasmic reticulum lumen. The enzyme catalyses a carboxylic ester + H2O = an alcohol + a carboxylate + H(+). The chain is Gut esterase 1 (ges-1) from Caenorhabditis briggsae.